We begin with the raw amino-acid sequence, 358 residues long: 3-isopropylmalate dehydrogenase (358 aa).

NAD(+) is bound at residue 75-88; the sequence is GPKWETLPPEKQPE. Positions 96, 106, 135, and 225 each coordinate substrate. Residues D225, D249, and D253 each contribute to the Mg(2+) site. Residue 283 to 295 participates in NAD(+) binding; the sequence is GSAPDIAGKGVAN.

Belongs to the isocitrate and isopropylmalate dehydrogenases family. LeuB type 1 subfamily. In terms of assembly, homodimer. Requires Mg(2+) as cofactor. It depends on Mn(2+) as a cofactor.

It localises to the cytoplasm. It carries out the reaction (2R,3S)-3-isopropylmalate + NAD(+) = 4-methyl-2-oxopentanoate + CO2 + NADH. It functions in the pathway amino-acid biosynthesis; L-leucine biosynthesis; L-leucine from 3-methyl-2-oxobutanoate: step 3/4. Functionally, catalyzes the oxidation of 3-carboxy-2-hydroxy-4-methylpentanoate (3-isopropylmalate) to 3-carboxy-4-methyl-2-oxopentanoate. The product decarboxylates to 4-methyl-2 oxopentanoate. This chain is 3-isopropylmalate dehydrogenase, found in Leptospira interrogans serogroup Icterohaemorrhagiae serovar copenhageni (strain Fiocruz L1-130).